The chain runs to 437 residues: Bile acid CoA-transferase BaiK (437 aa).

Catalysis depends on D171, which acts as the Nucleophile.

This sequence belongs to the CoA-transferase III family.

The enzyme catalyses deoxycholoyl-CoA + cholate = choloyl-CoA + deoxycholate. It catalyses the reaction allodeoxycholoyl-CoA + cholate = allodeoxycholate + choloyl-CoA. The catalysed reaction is allocholate + deoxycholoyl-CoA = allocholoyl-CoA + deoxycholate. It carries out the reaction allocholate + allodeoxycholoyl-CoA = allocholoyl-CoA + allodeoxycholate. The enzyme catalyses ursodeoxycholate + deoxycholoyl-CoA = ursodeoxycholoyl-CoA + deoxycholate. It catalyses the reaction allodeoxycholoyl-CoA + ursodeoxycholate = ursodeoxycholoyl-CoA + allodeoxycholate. The protein operates within lipid metabolism; bile acid biosynthesis. Functionally, functions in the bile acid 7alpha-dehydroxylation pathway, which forms secondary bile acids via the 7alpha-dehydroxylation of primary bile acids, and is carried out by intestinal anaerobic bacteria. Acts as a bile acid CoA transferase with broad bile acid substrate specificity. Catalyzes the transfer of the CoA moiety of secondary bile acid-CoA compounds to primary bile acids. Can use deoxycholoyl-CoA and allodeoxycholoyl-CoA as bile acid CoA donors and cholate, allocholate and ursodeoxycholate as bile acid CoA acceptors. Shows no activity when lithocholoyl-CoA is used as the CoA donor. This Clostridium scindens (strain JCM 10418 / VPI 12708) protein is Bile acid CoA-transferase BaiK.